Reading from the N-terminus, the 157-residue chain is Transcription elongation factor GreA (157 aa).

Belongs to the GreA/GreB family.

Functionally, necessary for efficient RNA polymerase transcription elongation past template-encoded arresting sites. The arresting sites in DNA have the property of trapping a certain fraction of elongating RNA polymerases that pass through, resulting in locked ternary complexes. Cleavage of the nascent transcript by cleavage factors such as GreA or GreB allows the resumption of elongation from the new 3'terminus. GreA releases sequences of 2 to 3 nucleotides. The sequence is that of Transcription elongation factor GreA from Chelativorans sp. (strain BNC1).